The sequence spans 177 residues: ATP synthase subunit delta (177 aa).

Belongs to the ATPase delta chain family. In terms of assembly, F-type ATPases have 2 components, F(1) - the catalytic core - and F(0) - the membrane proton channel. F(1) has five subunits: alpha(3), beta(3), gamma(1), delta(1), epsilon(1). F(0) has three main subunits: a(1), b(2) and c(10-14). The alpha and beta chains form an alternating ring which encloses part of the gamma chain. F(1) is attached to F(0) by a central stalk formed by the gamma and epsilon chains, while a peripheral stalk is formed by the delta and b chains.

It localises to the cell inner membrane. In terms of biological role, f(1)F(0) ATP synthase produces ATP from ADP in the presence of a proton or sodium gradient. F-type ATPases consist of two structural domains, F(1) containing the extramembraneous catalytic core and F(0) containing the membrane proton channel, linked together by a central stalk and a peripheral stalk. During catalysis, ATP synthesis in the catalytic domain of F(1) is coupled via a rotary mechanism of the central stalk subunits to proton translocation. Its function is as follows. This protein is part of the stalk that links CF(0) to CF(1). It either transmits conformational changes from CF(0) to CF(1) or is implicated in proton conduction. The polypeptide is ATP synthase subunit delta (Vibrio vulnificus (strain CMCP6)).